A 167-amino-acid chain; its full sequence is uncharacterized protein (167 aa).

The protein to B.subtilis XkdI.

This is an uncharacterized protein from Bacillus subtilis (strain 168).